A 149-amino-acid chain; its full sequence is Ribonuclease pancreatic (149 aa).

Positions 1 to 25 are cleaved as a signal peptide; that stretch reads MGLEKSLILFPLLVLVLGWVQPSLA. Residues lysine 32 and arginine 35 each coordinate substrate. Histidine 37 (proton acceptor) is an active-site residue. 4 disulfide bridges follow: cysteine 51–cysteine 109, cysteine 65–cysteine 120, cysteine 83–cysteine 135, and cysteine 90–cysteine 97. Substrate is bound by residues 66 to 70, lysine 91, and arginine 110; that span reads KPVNT. Histidine 144 (proton donor) is an active-site residue.

This sequence belongs to the pancreatic ribonuclease family. As to quaternary structure, monomer. Interacts with and forms tight 1:1 complexes with RNH1. Dimerization of two such complexes may occur. Interaction with RNH1 inhibits this protein. Pancreas.

Its subcellular location is the secreted. The enzyme catalyses an [RNA] containing cytidine + H2O = an [RNA]-3'-cytidine-3'-phosphate + a 5'-hydroxy-ribonucleotide-3'-[RNA].. It carries out the reaction an [RNA] containing uridine + H2O = an [RNA]-3'-uridine-3'-phosphate + a 5'-hydroxy-ribonucleotide-3'-[RNA].. Endonuclease that catalyzes the cleavage of RNA on the 3' side of pyrimidine nucleotides. Acts on single-stranded and double-stranded RNA. The protein is Ribonuclease pancreatic (RNASE1) of Uranomys ruddi (White-bellied brush-furred rat).